We begin with the raw amino-acid sequence, 251 residues long: Ubiquinone/menaquinone biosynthesis C-methyltransferase UbiE (251 aa).

Residues threonine 74, aspartate 95, 123-124 (NA), and serine 140 contribute to the S-adenosyl-L-methionine site.

Belongs to the class I-like SAM-binding methyltransferase superfamily. MenG/UbiE family.

The catalysed reaction is a 2-demethylmenaquinol + S-adenosyl-L-methionine = a menaquinol + S-adenosyl-L-homocysteine + H(+). It carries out the reaction a 2-methoxy-6-(all-trans-polyprenyl)benzene-1,4-diol + S-adenosyl-L-methionine = a 5-methoxy-2-methyl-3-(all-trans-polyprenyl)benzene-1,4-diol + S-adenosyl-L-homocysteine + H(+). It participates in quinol/quinone metabolism; menaquinone biosynthesis; menaquinol from 1,4-dihydroxy-2-naphthoate: step 2/2. The protein operates within cofactor biosynthesis; ubiquinone biosynthesis. Methyltransferase required for the conversion of demethylmenaquinol (DMKH2) to menaquinol (MKH2) and the conversion of 2-polyprenyl-6-methoxy-1,4-benzoquinol (DDMQH2) to 2-polyprenyl-3-methyl-6-methoxy-1,4-benzoquinol (DMQH2). The chain is Ubiquinone/menaquinone biosynthesis C-methyltransferase UbiE from Escherichia coli O1:K1 / APEC.